A 254-amino-acid chain; its full sequence is Type III pantothenate kinase (254 aa).

ATP is bound at residue 6–13 (DLGNSAIK). Substrate is bound by residues tyrosine 99 and 106–109 (GVDR). Aspartate 108 functions as the Proton acceptor in the catalytic mechanism. Aspartate 128 serves as a coordination point for K(+). Threonine 131 provides a ligand contact to ATP. Threonine 182 is a binding site for substrate.

It belongs to the type III pantothenate kinase family. As to quaternary structure, homodimer. It depends on NH4(+) as a cofactor. K(+) serves as cofactor.

It is found in the cytoplasm. The catalysed reaction is (R)-pantothenate + ATP = (R)-4'-phosphopantothenate + ADP + H(+). Its pathway is cofactor biosynthesis; coenzyme A biosynthesis; CoA from (R)-pantothenate: step 1/5. Catalyzes the phosphorylation of pantothenate (Pan), the first step in CoA biosynthesis. The sequence is that of Type III pantothenate kinase from Halorhodospira halophila (strain DSM 244 / SL1) (Ectothiorhodospira halophila (strain DSM 244 / SL1)).